The sequence spans 126 residues: Fluoride-specific ion channel FluC (126 aa).

Transmembrane regions (helical) follow at residues 2–22 (IKSL…RWLL) and 36–56 (GTLV…AYFL). Na(+) contacts are provided by Gly75 and Ser78. The next 2 helical transmembrane spans lie at 80-100 (FSTF…IWAL) and 105-125 (VHVI…TILF).

It belongs to the fluoride channel Fluc/FEX (TC 1.A.43) family. As to quaternary structure, homodimer.

It localises to the cell inner membrane. The catalysed reaction is fluoride(in) = fluoride(out). Na(+) is not transported, but it plays an essential structural role and its presence is essential for fluoride channel function. Its function is as follows. Fluoride-specific ion channel. Important for reducing fluoride concentration in the cell, thus reducing its toxicity. Is highly specific for fluoride ions and cannot transport chloride ions. This Escherichia coli O1:K1 / APEC protein is Fluoride-specific ion channel FluC.